The primary structure comprises 341 residues: Heat-inducible transcription repressor HrcA (341 aa).

Belongs to the HrcA family.

Functionally, negative regulator of class I heat shock genes (grpE-dnaK-dnaJ and groELS operons). Prevents heat-shock induction of these operons. In Corynebacterium jeikeium (strain K411), this protein is Heat-inducible transcription repressor HrcA.